The primary structure comprises 83 residues: Alpha-neurotoxin NTX-3 (83 aa).

A signal peptide spans 1–21 (MKTLLLTLLVVTIVCLDLGYT). 4 disulfide bridges follow: Cys24/Cys45, Cys38/Cys62, Cys64/Cys75, and Cys76/Cys81.

The protein belongs to the three-finger toxin family. Short-chain subfamily. Type I alpha-neurotoxin sub-subfamily. In terms of tissue distribution, expressed by the venom gland.

Its subcellular location is the secreted. Functionally, binds to muscle nicotinic acetylcholine receptor (nAChR) and inhibit acetylcholine from binding to the receptor, thereby impairing neuromuscular transmission. The sequence is that of Alpha-neurotoxin NTX-3 from Naja sputatrix (Malayan spitting cobra).